The following is a 67-amino-acid chain: Large ribosomal subunit protein bL32 (67 aa).

The span at 1–19 shows a compositional bias: basic residues; the sequence is MAVPKRKMSRSNTRSRRSQ. A disordered region spans residues 1–22; that stretch reads MAVPKRKMSRSNTRSRRSQWKA.

The protein belongs to the bacterial ribosomal protein bL32 family.

This Kineococcus radiotolerans (strain ATCC BAA-149 / DSM 14245 / SRS30216) protein is Large ribosomal subunit protein bL32.